The primary structure comprises 117 residues: DNA-directed RNA polymerase II subunit RPB11 (117 aa).

This sequence belongs to the archaeal Rpo11/eukaryotic RPB11/RPC19 RNA polymerase subunit family. Component of the RNA polymerase II (Pol II) complex consisting of 12 subunits.

Its subcellular location is the nucleus. In terms of biological role, DNA-dependent RNA polymerase catalyzes the transcription of DNA into RNA using the four ribonucleoside triphosphates as substrates. Component of RNA polymerase II which synthesizes mRNA precursors and many functional non-coding RNAs. Pol II is the central component of the basal RNA polymerase II transcription machinery. It is composed of mobile elements that move relative to each other. RPB11 is part of the core element with the central large cleft. This Drosophila melanogaster (Fruit fly) protein is DNA-directed RNA polymerase II subunit RPB11.